We begin with the raw amino-acid sequence, 472 residues long: UDP-glycosyltransferase 2 (472 aa).

UDP-alpha-D-glucose is bound by residues Ser283, Trp348 to Ala349, His366 to Glu374, and Tyr388 to Gln391.

Belongs to the UDP-glycosyltransferase family. As to expression, highly expressed in roots. Expressed in leaves and stems.

Its function is as follows. Glycosyltransferase that possesses isoflavonoids 4'-O- and 7-O-glucosyltransferase activities. Shows a successive glucosylation toward the acceptors producing their corresponding 4',7-O-diglucosides. Can use genistein, formononetin, daidzein, liquiritigenin and naringenin as substrates. Also shows a 3'-O-glucosylation activity in vitro. The chain is UDP-glycosyltransferase 2 from Pueraria montana var. lobata (Kudzu vine).